A 403-amino-acid polypeptide reads, in one-letter code: GDSL esterase/lipase At1g28590 (403 aa).

The first 27 residues, 1-27, serve as a signal peptide directing secretion; it reads MASLDSLPAMKLVRFILSTLLVTSVNS. Serine 43 serves as the catalytic Nucleophile. Asparagine 139 and asparagine 323 each carry an N-linked (GlcNAc...) asparagine glycan. Catalysis depends on residues aspartate 346 and histidine 349.

Belongs to the 'GDSL' lipolytic enzyme family.

The protein localises to the secreted. This is GDSL esterase/lipase At1g28590 from Arabidopsis thaliana (Mouse-ear cress).